Here is a 252-residue protein sequence, read N- to C-terminus: N-acetylglucosaminyl-phosphatidylinositol de-N-acetylase (252 aa).

The chain crosses the membrane as a helical span at residues 2–22; it reads EVVGLLCVAVAVLTWGFLRVW. The Cytoplasmic segment spans residues 23-252; it reads NSAERMRSPE…YMSVNSLQLL (230 aa).

Belongs to the PIGL family.

Its subcellular location is the endoplasmic reticulum membrane. It carries out the reaction a 6-(N-acetyl-alpha-D-glucosaminyl)-1-(1,2-diacyl-sn-glycero-3-phospho)-1D-myo-inositol + H2O = a 6-(alpha-D-glucosaminyl)-1-(1,2-diacyl-sn-glycero-3-phospho)-1D-myo-inositol + acetate. Its pathway is glycolipid biosynthesis; glycosylphosphatidylinositol-anchor biosynthesis. Its function is as follows. Catalyzes the second step of glycosylphosphatidylinositol (GPI) biosynthesis, which is the de-N-acetylation of N-acetylglucosaminyl-phosphatidylinositol. The protein is N-acetylglucosaminyl-phosphatidylinositol de-N-acetylase (Pigl) of Rattus norvegicus (Rat).